The primary structure comprises 494 residues: Guanosine-5'-triphosphate,3'-diphosphate pyrophosphatase (494 aa).

The protein belongs to the GppA/Ppx family. GppA subfamily.

The enzyme catalyses guanosine 3'-diphosphate 5'-triphosphate + H2O = guanosine 3',5'-bis(diphosphate) + phosphate + H(+). It participates in purine metabolism; ppGpp biosynthesis; ppGpp from GTP: step 2/2. Its function is as follows. Catalyzes the conversion of pppGpp to ppGpp. Guanosine pentaphosphate (pppGpp) is a cytoplasmic signaling molecule which together with ppGpp controls the 'stringent response', an adaptive process that allows bacteria to respond to amino acid starvation, resulting in the coordinated regulation of numerous cellular activities. The protein is Guanosine-5'-triphosphate,3'-diphosphate pyrophosphatase of Escherichia coli O6:H1 (strain CFT073 / ATCC 700928 / UPEC).